The following is a 324-amino-acid chain: Geranylgeranyl pyrophosphate synthase dpmpD (324 aa).

Lysine 50, arginine 53, and histidine 82 together coordinate isopentenyl diphosphate. Mg(2+) is bound by residues aspartate 89 and aspartate 93. Arginine 98 serves as a coordination point for dimethylallyl diphosphate. Arginine 99 serves as a coordination point for isopentenyl diphosphate. Lysine 176, threonine 177, and glutamine 210 together coordinate dimethylallyl diphosphate. Residue aspartate 213 coordinates Mg(2+). Residues asparagine 217, lysine 227, and lysine 237 each contribute to the dimethylallyl diphosphate site.

This sequence belongs to the FPP/GGPP synthase family. The cofactor is Mg(2+).

It catalyses the reaction isopentenyl diphosphate + dimethylallyl diphosphate = (2E)-geranyl diphosphate + diphosphate. The enzyme catalyses isopentenyl diphosphate + (2E)-geranyl diphosphate = (2E,6E)-farnesyl diphosphate + diphosphate. It carries out the reaction isopentenyl diphosphate + (2E,6E)-farnesyl diphosphate = (2E,6E,10E)-geranylgeranyl diphosphate + diphosphate. The protein operates within secondary metabolite biosynthesis; terpenoid biosynthesis. Geranylgeranyl pyrophosphate synthase; part of the gene cluster that mediates the biosynthesis of diterpenoid pyrones. The first step of the pathway is the synthesis of the alpha-pyrone moiety by the polyketide synthase dpmpA via condensation of one acetyl-CoA starter unit with 3 malonyl-CoA units and 2 methylations. The alpha-pyrone is then combined with geranylgeranyl pyrophosphate (GGPP) formed by the GGPP synthase dpmpD through the action of the prenyltransferase dpmpC to yield a linear alpha-pyrone diterpenoid. Subsequent steps in the diterpenoid pyrone biosynthetic pathway involve the decalin core formation, which is initiated by the epoxidation of the C10-C11 olefin by the FAD-dependent oxidoreductase dpmpE, and is followed by a cyclization cascade catalyzed by the terpene cyclase dpmpB. The short chain dehydrogenase/reductase dpmpG then oxidizes the 8S hydroxy group to a ketone and the short chain dehydrogenase/reductase dpmpH reduces the ketone to the 8R hydroxy group to yield higginsianin B. Higginsianin B is further methylated by the methyltransferase dpmpI to produce the intermediate named FDDP B. The cytochrome P450 monooxygenase dpmpJ then oxidizes the C-26 methyl to primary alcohol, producing the final diterpenoid pyrone with a C-26 primary alcohol on the gamma-pyrone moiety named FDDP C. The chain is Geranylgeranyl pyrophosphate synthase dpmpD from Macrophomina phaseolina (strain MS6) (Charcoal rot fungus).